The following is a 370-amino-acid chain: Protein STRICTOSIDINE SYNTHASE-LIKE 9 (370 aa).

The signal sequence occupies residues 1–26 (MPINQKIPTWFAVPAVFAVLSVISYQ). Residues Asn-97 and Asn-171 are each glycosylated (N-linked (GlcNAc...) asparagine).

The protein belongs to the strictosidine synthase family.

It localises to the vacuole. This is Protein STRICTOSIDINE SYNTHASE-LIKE 9 from Arabidopsis thaliana (Mouse-ear cress).